The primary structure comprises 317 residues: CTP-dependent diacylglycerol kinase 1 (317 aa).

Residues 1–44 (MANEEELQTAESAFVTGARRYSNDYSESESSSKHSGCSTPVEGT) are disordered. Over 1–130 (MANEEELQTA…DVDYRNVRLP (130 aa)) the chain is Lumenal. The span at 23-38 (NDYSESESSSKHSGCS) shows a compositional bias: low complexity. A helical transmembrane segment spans residues 131 to 151 (LIVGFVHVLLLDVIRLHWPAF). At 152-167 (NTLYCQVTGLLMRKKE) the chain is on the cytoplasmic side. Residues 168–188 (VHTYNGVLWYLLGLIFAFSFF) form a helical membrane-spanning segment. Residues 189–190 (SK) lie on the Lumenal side of the membrane. Residues 191 to 211 (DVALVSLFLLSWCDTAASTVG) form a helical membrane-spanning segment. Residues 212-230 (RLYGHLTPRISRNKSLAGS) lie on the Cytoplasmic side of the membrane. Residues 231 to 251 (LAAFVVGVISCAVFYGYFVPA) traverse the membrane as a helical segment. The Lumenal segment spans residues 252–271 (YSHVNHPGEIMWNPETSRLS). A helical membrane pass occupies residues 272–292 (LVQLSLLGGFVASLSEGIDLF). A topological domain (cytoplasmic) is located at residue Asn-293. The helical transmembrane segment at 294-314 (WDDNFTIPVLSAIFMHTIIAF) threads the bilayer. The Lumenal segment spans residues 315–317 (SQR).

Belongs to the DGK1 family. Requires Ca(2+) as cofactor. Mg(2+) is required as a cofactor.

The protein resides in the endoplasmic reticulum membrane. The protein localises to the nucleus membrane. The enzyme catalyses a 1,2-diacyl-sn-glycerol + CTP = a 1,2-diacyl-sn-glycero-3-phosphate + CDP + H(+). CTP-dependent diacylglycerol kinase that catalyzes the phosphorylation of diacylglycerol (DAG) to phosphatidate (PA). Controls phosphatidate levels at the nuclear envelope. May be involved in vesicle trafficking between the endoplasmic reticulum and the Golgi apparatus. The polypeptide is CTP-dependent diacylglycerol kinase 1 (DGK1) (Eremothecium gossypii (strain ATCC 10895 / CBS 109.51 / FGSC 9923 / NRRL Y-1056) (Yeast)).